Reading from the N-terminus, the 907-residue chain is MAPSSPSSAAAPTRTSTRKRAASASASAKATDEPSTKRTRRPKAETKPRKKKDEVKEEEKPPMEDDACGEEPDAEEMALGEEAEAEEAEAEQKQLDAPAPGVARKRVAQPSRVRHGSDGDHDPEFVGDPFPAKEARDKWPQRYQRNAATRRPDEEEDIKARCHYSSAKVDGTLYCLHDDVYVKAEEDKADYIGRITEFFEGTDHCHYFTCRWFFRAEDTVISSIMMENADDEKHDLKRVFLSEEKNDNVLDCIISKVKIVYIDPNMESEAKARRLADCDLYYDMSYTVAYSTFANIPLENGASGSDTASDISSDDVDSSKGKVVSDSEASSVGKATLLDLYSGCGGMSTGLCLGAALAGLNLETRWAVDFNSFACESLKYNHPRTEVRNEKADEFLALLKGWHSLCDEYVKKDIDFSSAGASENEEDDDEPLEKDEFVVEKLAGICYGGSGREDGLYFKVQWKGYGREEDTWEPIENLRDCPLKIKEFVQEGYRRKILPLPGDVDVICGGPPCQGISGFNRFRNRKEPLKDEKNKQMVTFMDIVAYLKPKYVLMENVVDILKFADGYLGRYALSRLVAMKYQARLGMMVAGCYGLPQFRMRVFLWGALPTMVLPKYPLPTHNVVVRGGAPNAFSQSIVAYDETQKPTLKNALLLGDAISDLPEVNNHQPNEVMEYGSSPKTEFQRYIRLSRKEMLDSSFEGKDGPDLGKLLDHQPLKLNKDDHERVQQIPVKKGANFRDLKGVRVGANNIVEWDPDVPRVYLSSGKPLVPDYAMSFIKGRSLKPFGRLWWDETVPTVVTRAEPHNQIILHPNQARVLTVRENARLQGFPDYYKMFGPIKEKYIQVGNAVAVPVARALGYSLGLAYQRESEGSSPLFVLPDSFTEVGRQAAPARASSVGIPVGEVVEQ.

Positions 1–15 (MAPSSPSSAAAPTRT) are enriched in low complexity. The interval 1–154 (MAPSSPSSAA…RNAATRRPDE (154 aa)) is disordered. Basic and acidic residues predominate over residues 30 to 63 (ATDEPSTKRTRRPKAETKPRKKKDEVKEEEKPPM). Over residues 64-89 (EDDACGEEPDAEEMALGEEAEAEEAE) the composition is skewed to acidic residues. Composition is skewed to basic and acidic residues over residues 115 to 124 (HGSDGDHDPE) and 131 to 140 (PAKEARDKWP). The BAH domain occupies 172–297 (TLYCLHDDVY…VAYSTFANIP (126 aa)). A disordered region spans residues 303–323 (SGSDTASDISSDDVDSSKGKV). The region spanning 335-868 (ATLLDLYSGC…YSLGLAYQRE (534 aa)) is the SAM-dependent MTase C5-type domain. Residues 437 to 500 (FVVEKLAGIC…EGYRRKILPL (64 aa)) form the Chromo domain. The active site involves cysteine 513.

The protein belongs to the class I-like SAM-binding methyltransferase superfamily. C5-methyltransferase family.

It is found in the nucleus. It carries out the reaction a 2'-deoxycytidine in DNA + S-adenosyl-L-methionine = a 5-methyl-2'-deoxycytidine in DNA + S-adenosyl-L-homocysteine + H(+). In terms of biological role, involved in CpXpG DNA methylation. Plays a critical role in the maintenance of CpXpG DNA methylation and suppression of a wide spectrum of transposable element (TE) activities. Required for proper plant development in reproductive stage. The sequence is that of DNA (cytosine-5)-methyltransferase CMT3 from Oryza sativa subsp. japonica (Rice).